The sequence spans 313 residues: Protein EMSY-LIKE 2 (313 aa).

The 88-residue stretch at 1–88 (MEAQIHILEQ…HQSLDVHPSP (88 aa)) folds into the ENT domain. The stretch at 35 to 58 (MTNLRKELRISDDENRQLLNNVHN) forms a coiled coil. Disordered regions lie at residues 84 to 106 (VHPS…YPSI) and 195 to 229 (LNVG…REHL). Residues 206–219 (GNRRTLSHGGRGRG) show a composition bias toward basic residues. Positions 267-293 (HELDKAKKLLKEHEQALIAAIARLTDA) form a coiled coil. A Phosphoserine modification is found at S294. A disordered region spans residues 294–313 (SDYESDGEEPYSHELPMLLG).

Interacts with EDM2 in nucleus.

Its subcellular location is the nucleus. Probably involved in the regulation of chromatin states. Contributes to RPP7-mediated and basal immunity, especially against Hyaloperonospora arabidopsidis isolate Hiks1. Regulates negatively EDM2-dependent floral transition. The polypeptide is Protein EMSY-LIKE 2 (Arabidopsis thaliana (Mouse-ear cress)).